We begin with the raw amino-acid sequence, 1179 residues long: RecBCD enzyme subunit RecB (1179 aa).

The DNA-binding and helicase activity, interacts with RecC stretch occupies residues 1-859 (MVYSDTKTSK…IIQNGKCMNY (859 aa)). The UvrD-like helicase ATP-binding domain maps to 18 to 459 (NIMKKKLNIF…YYLDTNWRSS (442 aa)). 39–46 (ASAGTGKT) lines the ATP pocket. Residues 485–755 (EPILSSSKNL…RIITIHKSKG (271 aa)) enclose the UvrD-like helicase C-terminal domain. Positions 910–1179 (YSQITSFTKI…KLTKLILQKK (270 aa)) are nuclease activity, interacts with RecD and RecA. H962, D1073, and D1086 together coordinate Mg(2+). D1086 (for nuclease activity) is an active-site residue.

It belongs to the helicase family. UvrD subfamily. In terms of assembly, heterotrimer of RecB, RecC and RecD. All subunits contribute to DNA-binding. Interacts with RecA. Requires Mg(2+) as cofactor.

The enzyme catalyses Exonucleolytic cleavage (in the presence of ATP) in either 5'- to 3'- or 3'- to 5'-direction to yield 5'-phosphooligonucleotides.. It carries out the reaction Couples ATP hydrolysis with the unwinding of duplex DNA by translocating in the 3'-5' direction.. It catalyses the reaction ATP + H2O = ADP + phosphate + H(+). A helicase/nuclease that prepares dsDNA breaks (DSB) for recombinational DNA repair. Binds to DSBs and unwinds DNA via a highly rapid and processive ATP-dependent bidirectional helicase activity. Unwinds dsDNA until it encounters a Chi (crossover hotspot instigator) sequence from the 3' direction. Cuts ssDNA a few nucleotides 3' to the Chi site. The properties and activities of the enzyme are changed at Chi. The Chi-altered holoenzyme produces a long 3'-ssDNA overhang and facilitates RecA-binding to the ssDNA for homologous DNA recombination and repair. Holoenzyme degrades any linearized DNA that is unable to undergo homologous recombination. In the holoenzyme this subunit contributes ATPase, 3'-5' helicase, exonuclease activity and loads RecA onto ssDNA. This chain is RecBCD enzyme subunit RecB, found in Buchnera aphidicola subsp. Schizaphis graminum (strain Sg).